Reading from the N-terminus, the 638-residue chain is Threonine--tRNA ligase (638 aa).

One can recognise a TGS domain in the interval methionine 1–threonine 61. Positions aspartate 242–proline 533 are catalytic. 3 residues coordinate Zn(2+): cysteine 333, histidine 384, and histidine 510.

The protein belongs to the class-II aminoacyl-tRNA synthetase family. As to quaternary structure, homodimer. Requires Zn(2+) as cofactor.

It localises to the cytoplasm. It carries out the reaction tRNA(Thr) + L-threonine + ATP = L-threonyl-tRNA(Thr) + AMP + diphosphate + H(+). Catalyzes the attachment of threonine to tRNA(Thr) in a two-step reaction: L-threonine is first activated by ATP to form Thr-AMP and then transferred to the acceptor end of tRNA(Thr). Also edits incorrectly charged L-seryl-tRNA(Thr). The polypeptide is Threonine--tRNA ligase (Prochlorococcus marinus subsp. pastoris (strain CCMP1986 / NIES-2087 / MED4)).